Here is a 572-residue protein sequence, read N- to C-terminus: EF-hand calcium-binding domain-containing protein 12 (572 aa).

2 disordered regions span residues 62–85 (VPRK…KPIP) and 146–169 (EQSA…PRLS). The region spanning 196-231 (SRKIKILEIFHKVGQGENQRITREEFIAAVKAVGVP) is the EF-hand domain. Residue Glu-212 participates in Ca(2+) binding.

This is EF-hand calcium-binding domain-containing protein 12 (EFCAB12) from Homo sapiens (Human).